Here is a 535-residue protein sequence, read N- to C-terminus: Dual specificity calcium/calmodulin-dependent 3',5'-cyclic nucleotide phosphodiesterase 1B (535 aa).

Positions 1–21 are disordered; sequence MELSPRSPPEMLESDCPSPLE. 2 positions are modified to phosphoserine: Ser-7 and Ser-14. 2 calmodulin-binding regions span residues 27 to 47 and 117 to 140; these read SKKMWIKLRSLLRYMVKQLEN and EKPKFRSIVHAVQAGIFVERMFRR. The PDEase domain maps to 145–502; it reads VGPTYSTAVH…QKWKERAASG (358 aa). His-222 serves as the catalytic Proton donor. 4 residues coordinate Zn(2+): His-226, His-262, Asp-263, and Asp-369. Residue Asp-263 coordinates Mg(2+). Disordered stretches follow at residues 445-474 and 495-535; these read PLTDDDSKSKSQPSFQWRQPSLDVDVGDPN and WKER…GNLD. Positions 454–463 are enriched in polar residues; that stretch reads KSQPSFQWRQ. Residues Ser-465 and Ser-513 each carry the phosphoserine modification.

It belongs to the cyclic nucleotide phosphodiesterase family. PDE1 subfamily. In terms of assembly, homodimer. It depends on Zn(2+) as a cofactor. Mg(2+) serves as cofactor. Expressed in brain.

It is found in the cytoplasm. Its subcellular location is the cytosol. It catalyses the reaction a nucleoside 3',5'-cyclic phosphate + H2O = a nucleoside 5'-phosphate + H(+). It carries out the reaction 3',5'-cyclic GMP + H2O = GMP + H(+). The enzyme catalyses 3',5'-cyclic AMP + H2O = AMP + H(+). Its activity is regulated as follows. Type I PDE are activated by the binding of calmodulin in the presence of Ca(2+). Cyclic nucleotide phosphodiesterase with a dual specificity for the second messengers cAMP and cGMP, which are key regulators of many important physiological processes. Has a preference for cGMP as a substrate. This chain is Dual specificity calcium/calmodulin-dependent 3',5'-cyclic nucleotide phosphodiesterase 1B, found in Rattus norvegicus (Rat).